A 155-amino-acid polypeptide reads, in one-letter code: Catabolic 3-dehydroquinase (155 aa).

Residue tyrosine 24 is the Proton acceptor of the active site. The substrate site is built by asparagine 75, histidine 81, and aspartate 88. Catalysis depends on histidine 101, which acts as the Proton donor. Residues 102–103 (VS) and arginine 112 contribute to the substrate site.

It belongs to the type-II 3-dehydroquinase family. Homododecamer. Adopts a ring-like structure, composed of an arrangement of two hexameric rings stacked on top of one another.

The enzyme catalyses 3-dehydroquinate = 3-dehydroshikimate + H2O. It functions in the pathway aromatic compound metabolism; 3,4-dihydroxybenzoate biosynthesis; 3,4-dihydroxybenzoate from 3-dehydroquinate: step 1/2. Its function is as follows. Is involved in the catabolism of quinate. Allows the utilization of quinate as carbon source via the beta-ketoadipate pathway. This Penicillium rubens (strain ATCC 28089 / DSM 1075 / NRRL 1951 / Wisconsin 54-1255) (Penicillium chrysogenum) protein is Catabolic 3-dehydroquinase.